The chain runs to 718 residues: Polyribonucleotide nucleotidyltransferase (718 aa).

Residues Asp-487 and Asp-493 each coordinate Mg(2+). Residues 554–613 (PRIETFKIPTDKIREVIGTGGKVIREIVEKTGAKVNIEDDGTVKVASSDGESIKAAIKWI) form the KH domain. Positions 623-691 (GEIYEGTVVK…DRGKTRLSMR (69 aa)) constitute an S1 motif domain. Positions 694-718 (DQETGEDLEAKQKAEGEAPAQATGE) are disordered.

This sequence belongs to the polyribonucleotide nucleotidyltransferase family. Mg(2+) is required as a cofactor.

It is found in the cytoplasm. The enzyme catalyses RNA(n+1) + phosphate = RNA(n) + a ribonucleoside 5'-diphosphate. Involved in mRNA degradation. Catalyzes the phosphorolysis of single-stranded polyribonucleotides processively in the 3'- to 5'-direction. This chain is Polyribonucleotide nucleotidyltransferase, found in Rhodopseudomonas palustris (strain HaA2).